The following is a 316-amino-acid chain: Phosphatidylinositol mannoside acyltransferase (316 aa).

Catalysis depends on histidine 137, which acts as the Proton acceptor. Residues histidine 137 and arginine 175 each contribute to the hexadecanoyl-CoA site. Glutamate 211 is a catalytic residue. Glutamate 240 contributes to the hexadecanoyl-CoA binding site.

It belongs to the LpxL/LpxM/LpxP family.

It localises to the cell inner membrane. It catalyses the reaction a 2,6-O-bis(alpha-D-mannopyranosyl)-1-phosphatidyl-1D-myo-inositol + an acyl-CoA = a 2-O-(alpha-D-mannosyl)-6-O-(6-O-acyl-alpha-D-mannosyl)-1-phosphatidyl-1D-myo-inositol + CoA. The enzyme catalyses a 1,2-diacyl-sn-glycero-3-phospho-[alpha-D-mannopyranosyl-(1&lt;-&gt;6)-D-myo-inositol] + an acyl-CoA = a 1,2-diacyl-sn-glycero-3-phospho-[alpha-D-6-acyl-mannopyranosyl-(1&lt;-&gt;6)-D-myo-inositol] + CoA. It participates in phospholipid metabolism; phosphatidylinositol metabolism. In terms of biological role, catalyzes the transfer of a palmitoyl moiety from palmitoyl-CoA to the 6-position of the mannose ring linked to the 2-position of myo-inositol in phosphatidyl-myo-inositol monomannoside (PIM1) or dimannoside (PIM2). In Mycobacterium tuberculosis (strain CDC 1551 / Oshkosh), this protein is Phosphatidylinositol mannoside acyltransferase.